The chain runs to 308 residues: Acetaldehyde dehydrogenase (308 aa).

10–13 (SGNI) is an NAD(+) binding site. The Acyl-thioester intermediate role is filled by C128. Residues 159–167 (SAGPGTRAN) and N285 contribute to the NAD(+) site.

The protein belongs to the acetaldehyde dehydrogenase family.

The catalysed reaction is acetaldehyde + NAD(+) + CoA = acetyl-CoA + NADH + H(+). This Salinispora tropica (strain ATCC BAA-916 / DSM 44818 / JCM 13857 / NBRC 105044 / CNB-440) protein is Acetaldehyde dehydrogenase.